Here is a 169-residue protein sequence, read N- to C-terminus: uncharacterized protein (169 aa).

A compositionally biased stretch (low complexity) spans 144–157; it reads AEAHSASPASSDSS. Residues 144-169 form a disordered region; sequence AEAHSASPASSDSSPLTNNIRPISIM. Polar residues predominate over residues 158–169; the sequence is PLTNNIRPISIM.

This is an uncharacterized protein from Saccharomyces cerevisiae (strain ATCC 204508 / S288c) (Baker's yeast).